Reading from the N-terminus, the 210-residue chain is MKMILGRKIGMTRLFINDVSIPVTVVRAGPCYVVQKKNPQIDGYCAIQVGFEHLKRVNKPLEGHFKKAQVKPLRLLREIRLEDENELDSYEIGQEIKLDIFQPGEKVDITGWTKGRGFSGGIKRWGFSGGPRAHGSKFHRELGSLGQHTEPAKIFKGKKMPGRYGNERVTIHNLEVIKIDLENNLLVLKGSVPGARGSLVIIKSPRRTRK.

Belongs to the universal ribosomal protein uL3 family. Part of the 50S ribosomal subunit. Forms a cluster with proteins L14 and L19.

Its function is as follows. One of the primary rRNA binding proteins, it binds directly near the 3'-end of the 23S rRNA, where it nucleates assembly of the 50S subunit. The chain is Large ribosomal subunit protein uL3 from Pseudothermotoga lettingae (strain ATCC BAA-301 / DSM 14385 / NBRC 107922 / TMO) (Thermotoga lettingae).